We begin with the raw amino-acid sequence, 877 residues long: Alanine--tRNA ligase (877 aa).

Residues His-565, His-569, Cys-667, and His-671 each contribute to the Zn(2+) site.

This sequence belongs to the class-II aminoacyl-tRNA synthetase family. Zn(2+) serves as cofactor.

The protein resides in the cytoplasm. It carries out the reaction tRNA(Ala) + L-alanine + ATP = L-alanyl-tRNA(Ala) + AMP + diphosphate. Functionally, catalyzes the attachment of alanine to tRNA(Ala) in a two-step reaction: alanine is first activated by ATP to form Ala-AMP and then transferred to the acceptor end of tRNA(Ala). Also edits incorrectly charged Ser-tRNA(Ala) and Gly-tRNA(Ala) via its editing domain. This chain is Alanine--tRNA ligase, found in Chromobacterium violaceum (strain ATCC 12472 / DSM 30191 / JCM 1249 / CCUG 213 / NBRC 12614 / NCIMB 9131 / NCTC 9757 / MK).